Consider the following 327-residue polypeptide: Glycolipid sulfotransferase BCG_1434 (327 aa).

Position 40 to 45 (40 to 45 (KSGLTW)) interacts with 3'-phosphoadenylyl sulfate. The active-site Proton acceptor is H97. 116-124 (RDPRDAAVS) is a 3'-phosphoadenylyl sulfate binding site.

It belongs to the sulfotransferase 1 family.

Its function is as follows. Involved in the synthesis of cell wall sulfolipids. The polypeptide is Glycolipid sulfotransferase BCG_1434 (Mycobacterium bovis (strain BCG / Pasteur 1173P2)).